The sequence spans 308 residues: Ornithine carbamoyltransferase (308 aa).

Residues 56 to 59 (STRT), Gln83, Arg107, and 134 to 137 (HPCQ) each bind carbamoyl phosphate. L-ornithine contacts are provided by residues Asn165, Asp225, and 229–230 (SM). Residues 266–267 (CL) and Arg294 contribute to the carbamoyl phosphate site.

It belongs to the aspartate/ornithine carbamoyltransferase superfamily. OTCase family.

The protein localises to the cytoplasm. It catalyses the reaction carbamoyl phosphate + L-ornithine = L-citrulline + phosphate + H(+). Its pathway is amino-acid biosynthesis; L-arginine biosynthesis; L-arginine from L-ornithine and carbamoyl phosphate: step 1/3. In terms of biological role, reversibly catalyzes the transfer of the carbamoyl group from carbamoyl phosphate (CP) to the N(epsilon) atom of ornithine (ORN) to produce L-citrulline. This chain is Ornithine carbamoyltransferase, found in Ruegeria pomeroyi (strain ATCC 700808 / DSM 15171 / DSS-3) (Silicibacter pomeroyi).